The following is a 559-amino-acid chain: Frizzled-1 (559 aa).

Positions 1 to 35 (MKHSHLLQRCSAQLCTRGSSLILSLLLSVCLSVEG) are cleaved as a signal peptide. Topologically, residues 36 to 239 (QYNGEKGISI…FAPEELNFAR (204 aa)) are extracellular. Residues 46-165 (PDHGYCQPIS…NGAGELCVGQ (120 aa)) enclose the FZ domain. 5 disulfide bridges follow: C51–C112, C59–C105, C96–C133, C122–C162, and C126–C150. N-linked (GlcNAc...) asparagine glycosylation is present at N65. N-linked (GlcNAc...) asparagine glycosylation occurs at N166. The chain crosses the membrane as a helical span at residues 240-260 (IWIGIWSVLCCASTLFTVLTY). Residues 261 to 273 (LVDMKRFSYPERP) are Cytoplasmic-facing. A helical transmembrane segment spans residues 274–294 (IIFLSGCYTMVAIAYIAGFLL). Residues 295 to 321 (EDKVVCNERFAEDGYKTVAQGTKKEGC) lie on the Extracellular side of the membrane. A helical transmembrane segment spans residues 322-342 (TFLFMMLYFFSMASSIWWVIL). Residues 343–364 (SLTWFLAAGMKWGHEAIEANSQ) are Cytoplasmic-facing. A helical transmembrane segment spans residues 365–385 (YFHLAAWAVPAIKTITILAVG). Over 386–408 (QVDGDTLSGVCFVGINNVDALRG) the chain is Extracellular. The helical transmembrane segment at 409 to 429 (FVLAPLFVYLFIGTSFLLAGF) threads the bilayer. Over 430–455 (VSLFRIRTIMKHDGTKTEKLEKLMVR) the chain is Cytoplasmic. A helical transmembrane segment spans residues 456–476 (IGIFSVLYTVPATIVIACYFY). At 477 to 513 (EQAFREQWEKSWISQSCKTYAIPCPSTGHPPMSPDFT) the chain is on the extracellular side. A helical transmembrane segment spans residues 514–534 (VFMIKYLMTLIVGITSGFWIW). Residues 535-559 (SGKTLNSWRKFYTRLTNSKQGETTV) are Cytoplasmic-facing. The short motif at 537–542 (KTLNSW) is the Lys-Thr-X-X-X-Trp motif, mediates interaction with the PDZ domain of Dvl family members element. The short motif at 557–559 (TTV) is the PDZ-binding element.

Belongs to the G-protein coupled receptor Fz/Smo family. In terms of assembly, interacts with wnt8. In the embryo, expressed in the heart, pronephros and otic vesicles.

The protein localises to the cell membrane. Functionally, receptor for Wnt proteins. Functions in the canonical Wnt/beta-catenin signaling pathway. The canonical Wnt/beta-catenin signaling pathway leads to the activation of disheveled proteins, inhibition of GSK-3 kinase, nuclear accumulation of beta-catenin and activation of Wnt target genes. A second signaling pathway involving PKC and calcium fluxes has been seen for some family members, but it is not yet clear if it represents a distinct pathway or if it can be integrated in the canonical pathway, as PKC seems to be required for Wnt-mediated inactivation of GSK-3 kinase. Both pathways seem to involve interactions with G-proteins. May be involved in transduction and intercellular transmission of polarity information during tissue morphogenesis and/or in differentiated tissues. This Xenopus laevis (African clawed frog) protein is Frizzled-1 (fzd1).